The following is a 147-amino-acid chain: Small ribosomal subunit protein uS12 (147 aa).

This sequence belongs to the universal ribosomal protein uS12 family. As to quaternary structure, part of the 30S ribosomal subunit.

With S4 and S5 plays an important role in translational accuracy. Located at the interface of the 30S and 50S subunits. This Sulfurisphaera tokodaii (strain DSM 16993 / JCM 10545 / NBRC 100140 / 7) (Sulfolobus tokodaii) protein is Small ribosomal subunit protein uS12.